Here is a 910-residue protein sequence, read N- to C-terminus: Triacylglycerol lipase 4 (910 aa).

The segment covering Ser-51–Lys-66 has biased composition (basic and acidic residues). The segment at Ser-51–Gly-120 is disordered. Ser-55 carries the post-translational modification Phosphoserine. The span at Thr-70–Thr-85 shows a compositional bias: polar residues. Positions Lys-90 to Asp-116 are enriched in acidic residues. The 202-residue stretch at Leu-282–Ser-483 folds into the PNPLA domain. A GXGXXG motif is present at residues Gly-286–Gly-291. Residues Gly-313 to Gly-317 carry the GXSXG motif. The Nucleophile role is filled by Ser-315. The Proton acceptor role is filled by Asp-470. Disordered stretches follow at residues Glu-657–Ile-683 and Ser-713–Gln-777. Over residues Pro-666–Ile-683 the composition is skewed to polar residues. Thr-675 carries the post-translational modification Phosphothreonine; by Cdk1. Phosphoserine occurs at positions 737, 749, 751, and 836. Residues Thr-739–Ile-768 show a composition bias toward polar residues. The interval Arg-874–Gln-910 is disordered. Positions Ser-889–Ser-899 are enriched in low complexity. Residue Ser-890 is modified to Phosphoserine; by Cdk1. Positions Thr-900–Gln-910 are enriched in polar residues.

In terms of processing, phosphorylation at Thr-675 and Ser-890 by Cdk1/CDC28 stimulates enzyme activity in vivo.

It is found in the lipid droplet. It carries out the reaction a triacylglycerol + H2O = a diacylglycerol + a fatty acid + H(+). The catalysed reaction is 1,2,3-tri-(9Z-octadecenoyl)-glycerol + H2O = di-(9Z)-octadecenoylglycerol + (9Z)-octadecenoate + H(+). It catalyses the reaction 1,2-dihexadecanoyl-sn-glycero-3-phosphocholine + H2O = 1-hexadecanoyl-sn-glycero-3-phosphocholine + hexadecanoate + H(+). The enzyme catalyses cholesteryl (9Z-octadecenoate) + H2O = cholesterol + (9Z)-octadecenoate + H(+). It carries out the reaction 1-(9Z-octadecenoyl)-sn-glycero-3-phosphate + (9Z)-octadecenoyl-CoA = 1,2-di-(9Z-octadecenoyl)-sn-glycero-3-phosphate + CoA. With respect to regulation, phosphorylated and activated by cyclin-dependent kinase 1 (Cdk1/CDC28). Loses its lipolytic activity in cells lacking nonpolar lipids, but retains its side activity as lysophospholipid acyltransferase. In terms of biological role, lipid particle-localized triacylglycerol (TAG) lipase. The lipid droplet/particle is a lipid storage compartment which serves as a depot of energy and building blocks for membrane lipid biosynthesis. Involved in the mobilization of the non-polar storage lipids triacylglycerols (TAGs) from lipid particles by hydrolysis of TAGs, releasing and supplying specific fatty acids to the appropriate metabolic pathways. Also has steryl ester (SE) hydrolase and phospholipase A(2) (PLA(2)) activities, and catalyzes the acylation of lysophosphatidic acid (LPA). Contributes to early bud formation in late G1 phase of the cell cycle upon phosphorylation and activation by cyclin-dependent kinase 1 (Cdk1/CDC28). This Saccharomyces cerevisiae (strain ATCC 204508 / S288c) (Baker's yeast) protein is Triacylglycerol lipase 4 (TGL4).